Here is a 503-residue protein sequence, read N- to C-terminus: MEFSVKSGSPEKQRSACIVVGVFEPRRLSPVAEQLDKISDGYISSLLRRGDLEGKPGQMLLLHQVPGVLSERVLLVGCGKERELGERQYKEIIQKTINTLNETGSMEAVCFLTELHVKGRDTYWKVRQAVEATKDGLYIFDQFKSVKPEIRRPLRKLVFNVPTRRELNLGERAITHGLAISSGVKACKDLGNMPPNIANPAYLASQARRLADDYESITTKIIGEEEMEKLGMASYLAVGRGSRNESMMSVIEYKGNPDPEAKPIVLVGKGLTFDSGGISLKPGEGMDEMKYDMCGAASVFGTMKAIAKLGLPLNVIGVLAGCENMPGSNAYRPGDILTTMSGQTVEVLNTDAEGRLVLCDVLTYVERFEPECVVDVATLTGACVIALGHHISAVMSNHNPLAHELVNASEQSSDRAWRLPLADEYHEQLKSPFADMANIGGRPGGAITAACFLSKFAKKYNWAHLDIAGTAWKSGAAKGSTGRPVSLLVQFLLNRSGGLDAEE.

Mn(2+)-binding residues include K269 and D274. Residue K281 is part of the active site. Mn(2+)-binding residues include D292, D351, and E353. R355 is an active-site residue.

It belongs to the peptidase M17 family. Requires Mn(2+) as cofactor.

Its subcellular location is the cytoplasm. It carries out the reaction Release of an N-terminal amino acid, Xaa-|-Yaa-, in which Xaa is preferably Leu, but may be other amino acids including Pro although not Arg or Lys, and Yaa may be Pro. Amino acid amides and methyl esters are also readily hydrolyzed, but rates on arylamides are exceedingly low.. The catalysed reaction is Release of an N-terminal amino acid, preferentially leucine, but not glutamic or aspartic acids.. In terms of biological role, presumably involved in the processing and regular turnover of intracellular proteins. Catalyzes the removal of unsubstituted N-terminal amino acids from various peptides. The chain is Cytosol aminopeptidase from Vibrio cholerae serotype O1 (strain ATCC 39541 / Classical Ogawa 395 / O395).